Here is a 362-residue protein sequence, read N- to C-terminus: Probable protein phosphatase 2C 11 (362 aa).

Residues 23–329 (KLGLSSMQGW…DNMTMVLVQF (307 aa)) form the PPM-type phosphatase domain. Mn(2+)-binding residues include aspartate 57, glycine 58, aspartate 272, and aspartate 320.

Belongs to the PP2C family. Requires Mg(2+) as cofactor. Mn(2+) serves as cofactor.

The catalysed reaction is O-phospho-L-seryl-[protein] + H2O = L-seryl-[protein] + phosphate. It catalyses the reaction O-phospho-L-threonyl-[protein] + H2O = L-threonyl-[protein] + phosphate. This chain is Probable protein phosphatase 2C 11, found in Oryza sativa subsp. japonica (Rice).